The chain runs to 84 residues: Small ribosomal subunit protein uS17c (84 aa).

Belongs to the universal ribosomal protein uS17 family. In terms of assembly, part of the 30S ribosomal subunit.

The protein resides in the plastid. It localises to the chloroplast. One of the primary rRNA binding proteins, it binds specifically to the 5'-end of 16S ribosomal RNA. This is Small ribosomal subunit protein uS17c (rps17) from Trieres chinensis (Marine centric diatom).